Here is a 572-residue protein sequence, read N- to C-terminus: [Pyruvate dehydrogenase [acetyl-transferring]]-phosphatase 1, mitochondrial (572 aa).

Residues 95–122 (NTSGNINMPSPNPKGTETQKSQRSQNDQ) form a disordered region. In terms of domain architecture, PPM-type phosphatase spans 153 to 543 (RYDVAQLPSN…DDLTVTVAFF (391 aa)). Mn(2+)-binding residues include Asp197, Gly198, Asp424, and Asp480. Basic and acidic residues predominate over residues 470 to 480 (EAQRPAFRYKD). The segment at 470-492 (EAQRPAFRYKDNNSSSPSGSNPE) is disordered. A compositionally biased stretch (low complexity) spans 481–491 (NNSSSPSGSNP).

Belongs to the PP2C family. Requires Mg(2+) as cofactor. Mn(2+) is required as a cofactor. In terms of processing, processed by mitochondrial inner membrane protease (IMP) complex and released to the intermembrane space.

It localises to the mitochondrion intermembrane space. The enzyme catalyses O-phospho-L-seryl-[pyruvate dehydrogenase E1 alpha subunit] + H2O = L-seryl-[pyruvate dehydrogenase E1 alpha subunit] + phosphate. Catalyzes the dephosphorylation and concomitant reactivation of the E1 alpha subunit (PDA1) of the pyruvate dehydrogenase complex. The polypeptide is [Pyruvate dehydrogenase [acetyl-transferring]]-phosphatase 1, mitochondrial (PTC5) (Saccharomyces cerevisiae (strain ATCC 204508 / S288c) (Baker's yeast)).